A 414-amino-acid polypeptide reads, in one-letter code: Serine hydroxymethyltransferase (414 aa).

(6S)-5,6,7,8-tetrahydrofolate-binding positions include leucine 116 and 120 to 122; that span reads GHL. Position 224 is an N6-(pyridoxal phosphate)lysine (lysine 224). (6S)-5,6,7,8-tetrahydrofolate-binding positions include glutamate 240 and 348–350; that span reads SPF.

Belongs to the SHMT family. As to quaternary structure, homodimer. Requires pyridoxal 5'-phosphate as cofactor.

It is found in the cytoplasm. It carries out the reaction (6R)-5,10-methylene-5,6,7,8-tetrahydrofolate + glycine + H2O = (6S)-5,6,7,8-tetrahydrofolate + L-serine. It participates in one-carbon metabolism; tetrahydrofolate interconversion. Its pathway is amino-acid biosynthesis; glycine biosynthesis; glycine from L-serine: step 1/1. Functionally, catalyzes the reversible interconversion of serine and glycine with tetrahydrofolate (THF) serving as the one-carbon carrier. This reaction serves as the major source of one-carbon groups required for the biosynthesis of purines, thymidylate, methionine, and other important biomolecules. Also exhibits THF-independent aldolase activity toward beta-hydroxyamino acids, producing glycine and aldehydes, via a retro-aldol mechanism. This chain is Serine hydroxymethyltransferase, found in Campylobacter jejuni subsp. jejuni serotype O:2 (strain ATCC 700819 / NCTC 11168).